The chain runs to 385 residues: MNHLRAEGPASVLAIGTANPENILLQDEFPDYYFRVTKSEHMTQLKEKFRKICDKSMIRKRNCFLNEEHLKQNPRLVEHEMQTLDARQDMLVVEVPKLGKDACAKAIKEWGQPKSKITHLIFTSASTTDMPGADYHCAKLLGLSPSVKRVMMYQLGCYGGGTVLRIAKDIAENNKGARVLAVCCDIMACLFRGPSESDLELLVGQAIFGDGAAAVIVGAEPDESVGERPIFELVSTGQTILPNSEGTIGGHIREAGLIFDLHKDVPMLISNNIEKCLIEAFTPIGISDWNSIFWITHPGGKAILDKVEEKLHLKSDKFVDSRHVLSEHGNMSSSTVLFVMDELRKRSLEEGKSTTGDGFEWGVLFGFGPGLTVERVVVRSVPIKY.

Cys-157 is a catalytic residue.

This sequence belongs to the thiolase-like superfamily. Chalcone/stilbene synthases family. Expressed in bracts, flowers and young leaves. Not detected in mature leaves, roots and stems. Expressed in glandular trichomes.

The catalysed reaction is hexanoyl-CoA + 3 malonyl-CoA + 3 H(+) = 3,5,7-trioxododecanoyl-CoA + 3 CO2 + 3 CoA. It catalyses the reaction 3,5,7-trioxododecanoyl-CoA = olivetol + CO2 + CoA. It participates in secondary metabolite biosynthesis; terpenoid biosynthesis. In terms of biological role, involved in the biosynthesis of cannabinoids-related terpenophenolic natural products, which have pharmacological activity. Polyketide synthase responsible for olivetol biosynthesis, from a C(12)-polyketide, probably 3,5,7-trioxododecanoyl-CoA. Catalyzes the first step in the cannabinoids biosynthetic pathway. The preferred substrate is hexanoyl-CoA, but also accepts CoA esters with C4 to C8 aliphatic side chains. When using malonyl-CoA and hexanoyl-CoA as substrates, produces undetermined compounds distinct form olivetol or olivetolic acid that could be hexanoyl triacetic acid lactone (HTAL) and pentyl diacetic acid lactone (PDAL). Produces olivetolic acid when acting in concert with olivetolic acid cyclase (OAC). The sequence is that of 3,5,7-trioxododecanoyl-CoA synthase from Cannabis sativa (Hemp).